Consider the following 62-residue polypeptide: Large ribosomal subunit protein bL28 (62 aa).

The protein belongs to the bacterial ribosomal protein bL28 family.

The chain is Large ribosomal subunit protein bL28 from Caldicellulosiruptor bescii (strain ATCC BAA-1888 / DSM 6725 / KCTC 15123 / Z-1320) (Anaerocellum thermophilum).